The primary structure comprises 603 residues: Probable HECT-type ubiquitin ligase-interacting protein creD (603 aa).

Disordered regions lie at residues Glu375–Ser398 and Leu432–Pro499. Positions Thr443–Arg455 are enriched in basic and acidic residues. A compositionally biased stretch (low complexity) spans Pro465–Arg481. The segment covering Arg482–Val492 has biased composition (basic and acidic residues).

Belongs to the arrestin family. As to quaternary structure, interacts with hulA.

In terms of biological role, component of the regulatory network controlling carbon source utilization through ubiquitination and deubiquitination involving creA, creB, creC, creD and acrB. May be involved in signaling by recognizing appropriately phosphorylated substrates via its arrestin domains and then recruit a HECT-type ubiquitin ligase such as hulA, leading to ubiquitination of the substrate, providing a link between ubiquitination and phosphorylation in protein regulation and stability. This chain is Probable HECT-type ubiquitin ligase-interacting protein creD (creD), found in Aspergillus flavus (strain ATCC 200026 / FGSC A1120 / IAM 13836 / NRRL 3357 / JCM 12722 / SRRC 167).